Consider the following 985-residue polypeptide: Rho guanine nucleotide exchange factor 2 (985 aa).

Residues methionine 1–lysine 32 form a disordered region. The segment at glycine 39–cysteine 86 adopts a Phorbol-ester/DAG-type zinc-finger fold. Phosphoserine occurs at positions 109, 122, 129, 133, and 137. Residues arginine 131–aspartate 161 form an interaction with DYNLT1 region. A Phosphoserine; by PAK4 modification is found at serine 143. A phosphoserine mark is found at serine 151, serine 163, serine 172, serine 174, and serine 177. Residues lysine 236–aspartate 433 form the DH domain. Position 354 is an N6-acetyllysine (lysine 354). A PH domain is found at lysine 473–arginine 572. Residues leucine 591–leucine 615 adopt a coiled-coil conformation. 2 positions are modified to phosphoserine: serine 646 and serine 649. Threonine 680 carries the post-translational modification Phosphothreonine; by MAPK1 or MAPK3. Phosphoserine is present on residues serine 692, serine 710, and serine 781. At threonine 795 the chain carries Phosphothreonine. A coiled-coil region spans residues glutamate 797–glutamate 866. A Phosphoserine modification is found at serine 885. Disordered regions lie at residues aspartate 890–aspartate 909 and histidine 918–serine 985. Tyrosine 893 is subject to Phosphotyrosine. Serine 895 carries the post-translational modification Phosphoserine; by PAK4. Over residues arginine 919–aspartate 938 the composition is skewed to basic and acidic residues. Residues serine 931, serine 939, and serine 940 each carry the phosphoserine modification. The segment covering serine 940–glutamate 949 has biased composition (acidic residues). The residue at position 944 (threonine 944) is a Phosphothreonine. Residues serine 946, serine 951, serine 952, serine 955, and serine 959 each carry the phosphoserine modification.

Found in a complex composed at least of ARHGEF2, NOD2 and RIPK2. Interacts with RIPK2; the interaction mediates tyrosine phosphorylation of RIPK2 by Src kinase CSK. Interacts with RIPK1 and RIPK3. Interacts with YWHAZ/14-3-3 zeta; when phosphorylated at Ser-885. Interacts with the kinases PAK4, AURKA and MAPK1. Interacts with RHOA and RAC1. Interacts with NOD1. Interacts (via the N- terminal zinc finger) with CAPN6 (via domain II). Interacts with DYNLT1. Post-translationally, phosphorylation of Ser-885 by PAK1 induces binding to protein YWHAZ, promoting its relocation to microtubules and the inhibition of its activity. Phosphorylated by AURKA and CDK1 during mitosis, which negatively regulates its activity. Phosphorylation by MAPK1 or MAPK3 increases nucleotide exchange activity. Phosphorylation by PAK4 releases GEF-H1 from the microtubules. Phosphorylated on serine, threonine and tyrosine residues in a RIPK2-dependent manner.

The protein localises to the cytoplasm. The protein resides in the cytoskeleton. It localises to the cell junction. It is found in the tight junction. Its subcellular location is the golgi apparatus. The protein localises to the spindle. The protein resides in the cytoplasmic vesicle. In terms of biological role, activates Rho-GTPases by promoting the exchange of GDP for GTP. May be involved in epithelial barrier permeability, cell motility and polarization, dendritic spine morphology, antigen presentation, leukemic cell differentiation, cell cycle regulation, innate immune response, and cancer. Binds Rac-GTPases, but does not seem to promote nucleotide exchange activity toward Rac-GTPases. May stimulate instead the cortical activity of Rac. Inactive toward CDC42, TC10, or Ras-GTPases. Forms an intracellular sensing system along with NOD1 for the detection of microbial effectors during cell invasion by pathogens. Involved in innate immune signaling transduction pathway promoting cytokine IL6/interleukin-6 and TNF-alpha secretion in macrophage upon stimulation by bacterial peptidoglycans; acts as a signaling intermediate between NOD2 receptor and RIPK2 kinase. Contributes to the tyrosine phosphorylation of RIPK2 through Src tyrosine kinase leading to NF-kappaB activation by NOD2. Overexpression activates Rho-, but not Rac-GTPases, and increases paracellular permeability. Involved in neuronal progenitor cell division and differentiation. Involved in the migration of precerebellar neurons. This Rattus norvegicus (Rat) protein is Rho guanine nucleotide exchange factor 2 (Arhgef2).